We begin with the raw amino-acid sequence, 279 residues long: Thymidylate synthase (279 aa).

141 to 142 (RR) serves as a coordination point for dUMP. Cys-161 functions as the Nucleophile in the catalytic mechanism. DUMP-binding positions include 181-184 (RSND), Asn-192, and 222-224 (HIY). Residue Asp-184 participates in (6R)-5,10-methylene-5,6,7,8-tetrahydrofolate binding. Ala-278 contributes to the (6R)-5,10-methylene-5,6,7,8-tetrahydrofolate binding site.

It belongs to the thymidylate synthase family. Bacterial-type ThyA subfamily. Homodimer.

Its subcellular location is the cytoplasm. It carries out the reaction dUMP + (6R)-5,10-methylene-5,6,7,8-tetrahydrofolate = 7,8-dihydrofolate + dTMP. It functions in the pathway pyrimidine metabolism; dTTP biosynthesis. Its function is as follows. Catalyzes the reductive methylation of 2'-deoxyuridine-5'-monophosphate (dUMP) to 2'-deoxythymidine-5'-monophosphate (dTMP) while utilizing 5,10-methylenetetrahydrofolate (mTHF) as the methyl donor and reductant in the reaction, yielding dihydrofolate (DHF) as a by-product. This enzymatic reaction provides an intracellular de novo source of dTMP, an essential precursor for DNA biosynthesis. This Bacillus licheniformis (strain ATCC 14580 / DSM 13 / JCM 2505 / CCUG 7422 / NBRC 12200 / NCIMB 9375 / NCTC 10341 / NRRL NRS-1264 / Gibson 46) protein is Thymidylate synthase.